Reading from the N-terminus, the 563-residue chain is Kdo(2)-lipid A phosphoethanolamine 7''-transferase (563 aa).

Topologically, residues 1 to 9 (MRYIKSITQ) are cytoplasmic. A helical transmembrane segment spans residues 10–30 (QKLSFLLAIYIGLFMNGAVFY). The Periplasmic segment spans residues 31-48 (RRFGSYAHDFTVWKGISA). The chain crosses the membrane as a helical span at residues 49-69 (VVELAATVLVTFFLLRLLSLF). Topologically, residues 70-79 (GRRSWRILAS) are cytoplasmic. A helical transmembrane segment spans residues 80-100 (LVVLFSAGASYYMTFLNVVIG). Over 101–117 (YGIIASVMTTDIDLSKE) the chain is Periplasmic. The chain crosses the membrane as a helical span at residues 118–138 (VVGLNFILWLIAVSALPLILI). Topologically, residues 139 to 159 (WNNRCRYTLLRQLRTPGQRIR) are cytoplasmic. A helical transmembrane segment spans residues 160 to 180 (SLAVVVLAGIMVWAPIRLLDI). Residues 181 to 563 (QQKKVERATG…IPQAKEAAAN (383 aa)) are Periplasmic-facing.

Belongs to the phosphoethanolamine transferase family. EptB subfamily. It depends on Ca(2+) as a cofactor.

The protein localises to the cell inner membrane. The catalysed reaction is alpha-Kdo-(2-&gt;4)-alpha-Kdo-(2-&gt;6)-lipid A (E. coli) + a 1,2-diacyl-sn-glycero-3-phosphoethanolamine = 7-O-[2-aminoethoxy(hydroxy)phosphoryl]-alpha-Kdo-(2-&gt;4)-alpha-Kdo-(2-&gt;6)-lipid A + a 1,2-diacyl-sn-glycerol. It catalyses the reaction alpha-Kdo-(2-&gt;4)-alpha-Kdo-(2-&gt;6)-lipid IVA (E. coli) + a 1,2-diacyl-sn-glycero-3-phosphoethanolamine = 7-O-[2-aminoethoxy(hydroxy)phosphoryl]-alpha-Kdo-(2-&gt;4)-alpha-Kdo-(2-&gt;6)-lipid IVA (E. coli) + a 1,2-diacyl-sn-glycerol. With respect to regulation, inhibited by calcium concentrations higher than 1 mM. Its function is as follows. Catalyzes the addition of a phosphoethanolamine (pEtN) moiety to the outer 3-deoxy-D-manno-octulosonic acid (Kdo) residue of a Kdo(2)-lipid A. Phosphatidylethanolamines with one unsaturated acyl group function as pEtN donors and the reaction releases diacylglycerol. This is Kdo(2)-lipid A phosphoethanolamine 7''-transferase (eptB) from Escherichia coli (strain K12).